A 197-amino-acid chain; its full sequence is Large ribosomal subunit protein bL25 (197 aa).

This sequence belongs to the bacterial ribosomal protein bL25 family. CTC subfamily. Part of the 50S ribosomal subunit; part of the 5S rRNA/L5/L18/L25 subcomplex. Contacts the 5S rRNA. Binds to the 5S rRNA independently of L5 and L18.

In terms of biological role, this is one of the proteins that binds to the 5S RNA in the ribosome where it forms part of the central protuberance. The polypeptide is Large ribosomal subunit protein bL25 (Caulobacter vibrioides (strain ATCC 19089 / CIP 103742 / CB 15) (Caulobacter crescentus)).